We begin with the raw amino-acid sequence, 506 residues long: Cytochrome P450 monooxygenase tpcB (506 aa).

Cys-450 is a heme binding site.

This sequence belongs to the cytochrome P450 family. The cofactor is heme.

Its pathway is secondary metabolite biosynthesis; terpenoid biosynthesis. Cytochrome P450 monooxygenase; part of the gene cluster that mediates the biosynthesis of terpestacin. The bifunctional terpene synthase tpcA converts isopentenyl diphosphate (IPP) and dimethylallyl diphosphate (DMAPP) into the sesterterpene preterpestacin I. The C-terminal prenyltransferase (PT) domain of tpcA catalyzes formation of GFPP, whereas the N-terminal terpene cyclase (TC) domain catalyzes the cyclization of GFPP into preterpestacin I. The cytochrome P450 monooxygenase tpcB then hydroxylates preterpestacin I to yield 24-hydroxypreterpstacin I (renamed as preterpestacin II) whereas the cytochrome P450 monooxygenase tpcC further hydroxylates preterpestacin II to yield 16,17-dihydroxypreterpestacin II (renamed as preterpestacin III). Finally, the FAD-dependent monooxygenase tpcD converts preterpestacin III into terpestacin. The protein is Cytochrome P450 monooxygenase tpcB of Cochliobolus heterostrophus (strain C5 / ATCC 48332 / race O) (Southern corn leaf blight fungus).